Reading from the N-terminus, the 216-residue chain is Lipoprotein signal peptidase (216 aa).

Residues 1-21 (MATSRTAPTRAPSLRSSPALE) form a disordered region. The next 3 helical transmembrane spans lie at 31 to 51 (VGAL…DQIT), 89 to 109 (GSTW…IWYA), and 114 to 134 (STAW…NLTD). Residues Asp-149 and Asp-164 contribute to the active site. Residues 159–179 (IFNLADVAIVFSMGLFLLLTL) traverse the membrane as a helical segment. Residues 189–216 (QRDEGAGVSSASPAGDESAADKPENLSA) are disordered. Positions 207–216 (AADKPENLSA) are enriched in basic and acidic residues.

The protein belongs to the peptidase A8 family.

The protein resides in the cell membrane. It carries out the reaction Release of signal peptides from bacterial membrane prolipoproteins. Hydrolyzes -Xaa-Yaa-Zaa-|-(S,diacylglyceryl)Cys-, in which Xaa is hydrophobic (preferably Leu), and Yaa (Ala or Ser) and Zaa (Gly or Ala) have small, neutral side chains.. Its pathway is protein modification; lipoprotein biosynthesis (signal peptide cleavage). This protein specifically catalyzes the removal of signal peptides from prolipoproteins. This Leifsonia xyli subsp. xyli (strain CTCB07) protein is Lipoprotein signal peptidase.